A 144-amino-acid polypeptide reads, in one-letter code: L-fucose mutarotase (144 aa).

Histidine 22 (proton donor) is an active-site residue. Substrate is bound by residues aspartate 30, arginine 109, and 131–133; that span reads YGN.

Belongs to the RbsD / FucU family. FucU mutarotase subfamily. In terms of assembly, homodecamer.

It localises to the cytoplasm. It catalyses the reaction alpha-L-fucose = beta-L-fucose. It participates in carbohydrate metabolism; L-fucose metabolism. Functionally, involved in the anomeric conversion of L-fucose. This chain is L-fucose mutarotase, found in Histophilus somni (strain 129Pt) (Haemophilus somnus).